Reading from the N-terminus, the 234-residue chain is SPX domain-containing protein 6 (234 aa).

Residues 1-137 (MKFGKLLKRQ…GGALAAPVAE (137 aa)) enclose the SPX domain. The disordered stretch occupies residues 202–234 (GSSTHGRHSLPPLTLPDSDWLRSFQPPSPIPIQ).

In terms of tissue distribution, predominantly expressed in roots and leaves.

Functionally, may be involved in maintaining cellular Pi homeostasis when plants are exposed to an external change in Pi. The protein is SPX domain-containing protein 6 of Oryza sativa subsp. japonica (Rice).